A 40-amino-acid polypeptide reads, in one-letter code: Photosystem II reaction center protein J (40 aa).

A helical membrane pass occupies residues 8-28 (IPLWLIGTVTGILVIGLIGFF).

It belongs to the PsbJ family. PSII is composed of 1 copy each of membrane proteins PsbA, PsbB, PsbC, PsbD, PsbE, PsbF, PsbH, PsbI, PsbJ, PsbK, PsbL, PsbM, PsbT, PsbX, PsbY, PsbZ, Psb30/Ycf12, at least 3 peripheral proteins of the oxygen-evolving complex and a large number of cofactors. It forms dimeric complexes.

It is found in the plastid. Its subcellular location is the chloroplast thylakoid membrane. One of the components of the core complex of photosystem II (PSII). PSII is a light-driven water:plastoquinone oxidoreductase that uses light energy to abstract electrons from H(2)O, generating O(2) and a proton gradient subsequently used for ATP formation. It consists of a core antenna complex that captures photons, and an electron transfer chain that converts photonic excitation into a charge separation. The sequence is that of Photosystem II reaction center protein J from Zea mays (Maize).